A 517-amino-acid chain; its full sequence is UDP-N-acetylmuramoylalanine--D-glutamate ligase (517 aa).

Residue 143–149 (GTNGKTT) participates in ATP binding.

It belongs to the MurCDEF family.

It is found in the cytoplasm. The enzyme catalyses UDP-N-acetyl-alpha-D-muramoyl-L-alanine + D-glutamate + ATP = UDP-N-acetyl-alpha-D-muramoyl-L-alanyl-D-glutamate + ADP + phosphate + H(+). Its pathway is cell wall biogenesis; peptidoglycan biosynthesis. In terms of biological role, cell wall formation. Catalyzes the addition of glutamate to the nucleotide precursor UDP-N-acetylmuramoyl-L-alanine (UMA). The polypeptide is UDP-N-acetylmuramoylalanine--D-glutamate ligase (Leifsonia xyli subsp. xyli (strain CTCB07)).